Here is a 426-residue protein sequence, read N- to C-terminus: Divalent metal cation transporter MntH (426 aa).

10 helical membrane-spanning segments follow: residues 31-51 (WYLL…GNVA), 58-78 (AQFG…AGLV), 134-156 (ILFR…LLLM), 169-189 (VITG…FVAT), 208-228 (SVLL…VYLH), 256-276 (VILA…VAAI), 298-318 (LGAT…LASA), 337-357 (IPML…LALG), 363-383 (ALVL…LPLV), and 402-422 (TVLG…LIYL).

This sequence belongs to the NRAMP family.

The protein resides in the cell membrane. Its function is as follows. H(+)-stimulated, divalent metal cation uptake system. This Mycobacterium leprae (strain TN) protein is Divalent metal cation transporter MntH.